The primary structure comprises 460 residues: Methylenetetrahydrofolate--tRNA-(uracil-5-)-methyltransferase TrmFO (460 aa).

12 to 17 (GGGLAG) is a binding site for FAD.

The protein belongs to the MnmG family. TrmFO subfamily. The cofactor is FAD.

It localises to the cytoplasm. The catalysed reaction is uridine(54) in tRNA + (6R)-5,10-methylene-5,6,7,8-tetrahydrofolate + NADH + H(+) = 5-methyluridine(54) in tRNA + (6S)-5,6,7,8-tetrahydrofolate + NAD(+). It catalyses the reaction uridine(54) in tRNA + (6R)-5,10-methylene-5,6,7,8-tetrahydrofolate + NADPH + H(+) = 5-methyluridine(54) in tRNA + (6S)-5,6,7,8-tetrahydrofolate + NADP(+). Functionally, catalyzes the folate-dependent formation of 5-methyl-uridine at position 54 (M-5-U54) in all tRNAs. In Crocosphaera subtropica (strain ATCC 51142 / BH68) (Cyanothece sp. (strain ATCC 51142)), this protein is Methylenetetrahydrofolate--tRNA-(uracil-5-)-methyltransferase TrmFO.